Reading from the N-terminus, the 281-residue chain is MFKFFKNKQDNKKIERKIEFKEKLNSLEENVVFKIENLSLWYKKGEKQALKNVSANIAKNHVTALIGPSGCGKSTFLRELNRMNDTIEGVLTDGNIFFEGKNIKSKKLPVTFLRTRVGMVFQKPTPFPISIYDNIAYGPRSNGIHNKKVLDKIVENALKSAALWEEVKNNLKDLGTSLSGGQQQRLCIARAIAIEPHVLLMDEPTSALDPIATAKVEELILKLKDRYSIVIVTHSMSQAQRISDDTLFFYAGEIVEANKTKEIFLRPQLKRTRDYINGRIG.

The 244-residue stretch at 33–276 (FKIENLSLWY…PQLKRTRDYI (244 aa)) folds into the ABC transporter domain. An ATP-binding site is contributed by 67–74 (GPSGCGKS).

This sequence belongs to the ABC transporter superfamily. Phosphate importer (TC 3.A.1.7) family. As to quaternary structure, the complex is composed of two ATP-binding proteins (PstB), two transmembrane proteins (PstC and PstA) and a solute-binding protein (PstS).

Its subcellular location is the cell membrane. The enzyme catalyses phosphate(out) + ATP + H2O = ADP + 2 phosphate(in) + H(+). Part of the ABC transporter complex PstSACB involved in phosphate import. Responsible for energy coupling to the transport system. This Mycoplasma mobile (strain ATCC 43663 / 163K / NCTC 11711) (Mesomycoplasma mobile) protein is Phosphate import ATP-binding protein PstB.